The following is a 113-amino-acid chain: Large ribosomal subunit protein bL17 (113 aa).

This sequence belongs to the bacterial ribosomal protein bL17 family. Part of the 50S ribosomal subunit. Contacts protein L32.

This Caldicellulosiruptor bescii (strain ATCC BAA-1888 / DSM 6725 / KCTC 15123 / Z-1320) (Anaerocellum thermophilum) protein is Large ribosomal subunit protein bL17.